A 782-amino-acid polypeptide reads, in one-letter code: E3 UFM1-protein ligase 1 homolog (782 aa).

The tract at residues 404–478 (NVSTQELEDE…SRGGGGASKK (75 aa)) is disordered.

This sequence belongs to the UFL1 family.

Functionally, E3 UFM1-protein ligase that mediates ufmylation of target proteins. In Drosophila melanogaster (Fruit fly), this protein is E3 UFM1-protein ligase 1 homolog.